The sequence spans 313 residues: Ethylene-responsive transcription factor ERN2 (313 aa).

The span at 1-10 (MEIQFDEPKK) shows a compositional bias: basic and acidic residues. The tract at residues 1-29 (MEIQFDEPKKSLRPKKVNKFKGRNKKSET) is disordered. Over residues 11–24 (SLRPKKVNKFKGRN) the composition is skewed to basic residues. The segment at residues 32–89 (KFVGVRQRPSGRYVAEIKDTTQNIRMWLGTFETAEEAARAYDEAATLLRGSKTRTNFV) is a DNA-binding region (AP2/ERF). Disordered stretches follow at residues 108 to 143 (NRKK…TSST) and 157 to 204 (TSAS…SSST). Composition is skewed to low complexity over residues 122–143 (SSTT…TSST) and 157–193 (TSAS…TNVN).

Belongs to the AP2/ERF transcription factor family. ERF subfamily. Expressed in roots, root hairs and leaves. Expressed in root epidermis and root hairs.

It is found in the nucleus. In terms of biological role, transcription factor involved in symbiotic nodule signaling in response to rhizobial Nod factors (NFs). Binds to the GCC box (NF-responsive box) of ENOD11 promoter. Acts as a transcriptional activator of NF-responsive box-containing target gene promoters in root hairs. Involved in early stages of root nodule development. Functions redundantly with ERN1. Is essential with ERN1 for the initiation of root hair infection, and nodule organogenesis and development. Required for accurate expression of the NF signaling genes ENOD11 and ENOD12. The protein is Ethylene-responsive transcription factor ERN2 of Medicago truncatula (Barrel medic).